Reading from the N-terminus, the 569-residue chain is Urease subunit alpha (569 aa).

The region spanning 131-569 (GSIDTHIHFI…VPMAQRYFLL (439 aa)) is the Urease domain. Ni(2+) contacts are provided by His136, His138, and Lys219. Residue Lys219 is modified to N6-carboxylysine. His221 contributes to the substrate binding site. Residues His248 and His274 each coordinate Ni(2+). His322 (proton donor) is an active-site residue. Asp362 serves as a coordination point for Ni(2+).

It belongs to the metallo-dependent hydrolases superfamily. Urease alpha subunit family. Heterotrimer of UreA (gamma), UreB (beta) and UreC (alpha) subunits. Three heterotrimers associate to form the active enzyme. The cofactor is Ni cation. Post-translationally, carboxylation allows a single lysine to coordinate two nickel ions.

The protein localises to the cytoplasm. The catalysed reaction is urea + 2 H2O + H(+) = hydrogencarbonate + 2 NH4(+). The protein operates within nitrogen metabolism; urea degradation; CO(2) and NH(3) from urea (urease route): step 1/1. This Prochlorococcus marinus (strain MIT 9215) protein is Urease subunit alpha.